Reading from the N-terminus, the 383-residue chain is Succinyl-diaminopimelate desuccinylase (383 aa).

Histidine 79 contributes to the Zn(2+) binding site. The active site involves aspartate 81. Aspartate 110 serves as a coordination point for Zn(2+). Catalysis depends on glutamate 141, which acts as the Proton acceptor. Positions 142, 170, and 355 each coordinate Zn(2+).

It belongs to the peptidase M20A family. DapE subfamily. In terms of assembly, homodimer. Requires Zn(2+) as cofactor. Co(2+) serves as cofactor.

It carries out the reaction N-succinyl-(2S,6S)-2,6-diaminopimelate + H2O = (2S,6S)-2,6-diaminopimelate + succinate. It functions in the pathway amino-acid biosynthesis; L-lysine biosynthesis via DAP pathway; LL-2,6-diaminopimelate from (S)-tetrahydrodipicolinate (succinylase route): step 3/3. Functionally, catalyzes the hydrolysis of N-succinyl-L,L-diaminopimelic acid (SDAP), forming succinate and LL-2,6-diaminopimelate (DAP), an intermediate involved in the bacterial biosynthesis of lysine and meso-diaminopimelic acid, an essential component of bacterial cell walls. The sequence is that of Succinyl-diaminopimelate desuccinylase from Helicobacter pylori (strain P12).